We begin with the raw amino-acid sequence, 84 residues long: UPF0729 protein F18A11.3 (84 aa).

A helical transmembrane segment spans residues 1-21 (MVCLPCIFLPIMMAIYMKFIM).

This sequence belongs to the UPF0729 family.

Its subcellular location is the cell membrane. The sequence is that of UPF0729 protein F18A11.3 from Caenorhabditis elegans.